We begin with the raw amino-acid sequence, 248 residues long: Protein G1-like6 (248 aa).

Residues 1–15 show a composition bias toward basic residues; the sequence is MDRHHHHHHHHHHHM. Disordered stretches follow at residues 1–35, 50–84, and 198–248; these read MDRH…GATQ, GAGS…YESQ, and ARGI…FIIP. The segment covering 17–32 has biased composition (gly residues); the sequence is SGGGQDPAAGDGGAGG. A compositionally biased stretch (low complexity) spans 50–59; the sequence is GAGSSSSGAG. Residues 60–69 show a composition bias toward gly residues; the sequence is TSAGGGGGGP. A compositionally biased stretch (low complexity) spans 70-79; the sequence is SPSSSSPSLS. An ALOG domain is found at 80 to 207; the sequence is RYESQKRRDW…ARGISYEKKK (128 aa). Residues 205–209 carry the Nuclear localization signal motif; the sequence is KKKRK. Low complexity-rich tracts occupy residues 212–224 and 239–248; these read SSAG…SSEG and TSASPQFIIP.

The protein belongs to the plant homeotic and developmental regulators ALOG protein family.

The protein resides in the nucleus. Probable transcription regulator that acts as a developmental regulator by promoting cell growth in response to light. The sequence is that of Protein G1-like6 from Oryza sativa subsp. indica (Rice).